The sequence spans 279 residues: Energy-coupling factor transporter ATP-binding protein EcfA (279 aa).

The ABC transporter domain occupies 5–240 (IELEKINYKY…GPELIDLGLD (236 aa)). 40 to 47 (GHNGSGKS) is a binding site for ATP.

This sequence belongs to the ABC transporter superfamily. Energy-coupling factor EcfA family. In terms of assembly, forms a stable energy-coupling factor (ECF) transporter complex composed of 2 membrane-embedded substrate-binding proteins (S component), 2 ATP-binding proteins (A component) and 2 transmembrane proteins (T component).

The protein resides in the cell membrane. Its function is as follows. ATP-binding (A) component of a common energy-coupling factor (ECF) ABC-transporter complex. Unlike classic ABC transporters this ECF transporter provides the energy necessary to transport a number of different substrates. The chain is Energy-coupling factor transporter ATP-binding protein EcfA from Enterococcus faecium (Streptococcus faecium).